The sequence spans 395 residues: Leukosialin (395 aa).

A signal peptide spans 1–19 (MALHLLLLFGACWVQVASP). Residues 20–248 (DSLQRTTMLP…TRSPSQESSG (229 aa)) lie on the Extracellular side of the membrane. Over residues 27–56 (MLPSTPHITAPSTSEAQNASPSVSVGSGTV) the composition is skewed to polar residues. A disordered region spans residues 27–245 (MLPSTPHITA…PITTRSPSQE (219 aa)). Residues 73–88 (SLTPLETTELSSLETS) show a composition bias toward low complexity. Polar residues-rich tracts occupy residues 89–111 (AGAS…SKTS) and 145–154 (TAASTSISKG). Positions 155-166 (TSAPPTTVTTSS) are enriched in low complexity. Residue N167 is glycosylated (N-linked (GlcNAc...) asparagine). The span at 167-196 (NETSGPSVATTVSSKTSGPPVTTATGSLGP) shows a compositional bias: polar residues. The span at 205 to 241 (ATTATSSVESSSVARGTSVSSRKTSTTSTQDPITTRS) shows a compositional bias: low complexity. Residues 249 to 271 (MLLVPMLIALVVVLALVALLLLW) traverse the membrane as a helical segment. The segment at 272–302 (RQRQKRRTGALTLSGGGKRNGVVDAWAGPAR) is required for interaction with EZR, MSN and RDX and for co-localization to microvilli. Topologically, residues 272-395 (RQRQKRRTGA…AKDEAAPQSL (124 aa)) are cytoplasmic. Residues 276–290 (KRRTGALTLSGGGKR) carry the Nuclear localization signal motif. S285 and S328 each carry phosphoserine. The tract at residues 303-395 (VPDEEATTTS…AKDEAAPQSL (93 aa)) is disordered. The segment covering 327-338 (GSGQRPTLTTFF) has biased composition (polar residues). A Phosphothreonine modification is found at T333. Phosphoserine occurs at positions 339 and 343. S347 carries the phosphoserine; by PKC/PRKCQ modification. At S371 the chain carries Phosphoserine. T378 is subject to Phosphothreonine. Positions 385–395 (QAKDEAAPQSL) are enriched in basic and acidic residues.

Interacts with SIGLEC1. As to quaternary structure, interacts with isoform 2 of HIPK2. Interacts with CTNNB1. Interacts with RDX (via FERM domain). Interacts with EZR. Interacts with MSN. Post-translationally, phosphorylation at Ser-347 is regulated by chemokines, requires its association with ERM proteins (EZR, RDX and MSN) and is essential for its function in the regulation of T-cell trafficking to lymph nodes. In terms of processing, has a high content of sialic acid and O-linked carbohydrate structures. Cleavage by CTSG releases its extracellular domain and triggers its intramembrane proteolysis by gamma-secretase releasing the CD43 cytoplasmic tail chain (CD43-ct) which translocates to the nucleus. Post-translationally, sumoylated. As to expression, cell surface of thymocytes, T-lymphocytes, neutrophils, plasma cells and myelomas.

The protein resides in the membrane. The protein localises to the cell projection. Its subcellular location is the microvillus. It is found in the uropodium. It localises to the nucleus. The protein resides in the PML body. Functionally, predominant cell surface sialoprotein of leukocytes which regulates multiple T-cell functions, including T-cell activation, proliferation, differentiation, trafficking and migration. Positively regulates T-cell trafficking to lymph-nodes via its association with ERM proteins (EZR, RDX and MSN). Negatively regulates Th2 cell differentiation and predisposes the differentiation of T-cells towards a Th1 lineage commitment. Promotes the expression of IFN-gamma by T-cells during T-cell receptor (TCR) activation of naive cells and induces the expression of IFN-gamma by CD4(+) T-cells and to a lesser extent by CD8(+) T-cells. Plays a role in preparing T-cells for cytokine sensing and differentiation into effector cells by inducing the expression of cytokine receptors IFNGR and IL4R, promoting IFNGR and IL4R signaling and by mediating the clustering of IFNGR with TCR. Acts as a major E-selectin ligand responsible for Th17 cell rolling on activated vasculature and recruitment during inflammation. Mediates Th17 cells, but not Th1 cells, adhesion to E-selectin. Acts as a T-cell counter-receptor for SIGLEC1. In terms of biological role, protects cells from apoptotic signals, promoting cell survival. The polypeptide is Leukosialin (Spn) (Mus musculus (Mouse)).